The sequence spans 337 residues: Ornithine carbamoyltransferase (337 aa).

Residues 57–60 (STRT), Gln84, Arg108, and 135–138 (HPTQ) each bind carbamoyl phosphate. L-ornithine is bound by residues Asn167, Asp231, and 235–236 (SM). Carbamoyl phosphate contacts are provided by residues 272–273 (CL) and Arg317.

This sequence belongs to the aspartate/ornithine carbamoyltransferase superfamily. OTCase family.

The protein resides in the cytoplasm. It carries out the reaction carbamoyl phosphate + L-ornithine = L-citrulline + phosphate + H(+). It participates in amino-acid degradation; L-arginine degradation via ADI pathway; carbamoyl phosphate from L-arginine: step 2/2. In terms of biological role, reversibly catalyzes the transfer of the carbamoyl group from carbamoyl phosphate (CP) to the N(epsilon) atom of ornithine (ORN) to produce L-citrulline. This Streptococcus equi subsp. equi (strain 4047) protein is Ornithine carbamoyltransferase.